Consider the following 93-residue polypeptide: Small ribosomal subunit protein uS19 (93 aa).

It belongs to the universal ribosomal protein uS19 family.

In terms of biological role, protein S19 forms a complex with S13 that binds strongly to the 16S ribosomal RNA. The chain is Small ribosomal subunit protein uS19 from Mycobacterium marinum (strain ATCC BAA-535 / M).